Reading from the N-terminus, the 647-residue chain is UvrABC system protein C (647 aa).

Residues 26-106 (SEPGCYLMRD…IKEHQPYFNI (81 aa)) form the GIY-YIG domain. The UVR domain occupies 216–251 (DQLKDLLHKQMLIQSKLQEFEKAAIIRDQIKGIEQL).

The protein belongs to the UvrC family. Interacts with UvrB in an incision complex.

Its subcellular location is the cytoplasm. In terms of biological role, the UvrABC repair system catalyzes the recognition and processing of DNA lesions. UvrC both incises the 5' and 3' sides of the lesion. The N-terminal half is responsible for the 3' incision and the C-terminal half is responsible for the 5' incision. The protein is UvrABC system protein C of Prochlorococcus marinus (strain MIT 9211).